A 488-amino-acid polypeptide reads, in one-letter code: Putative BPI/LBP family protein At1g04970 (488 aa).

The first 24 residues, 1 to 24 (MDVGRCFLFLLLPSFFFLPSQTQS), serve as a signal peptide directing secretion. N-linked (GlcNAc...) asparagine glycans are attached at residues asparagine 79, asparagine 109, asparagine 231, asparagine 242, and asparagine 341.

Belongs to the BPI/LBP/Plunc superfamily. BPI/LBP (TC 1.C.40) family.

This Arabidopsis thaliana (Mouse-ear cress) protein is Putative BPI/LBP family protein At1g04970.